Consider the following 338-residue polypeptide: Lipoate-protein ligase A (338 aa).

In terms of domain architecture, BPL/LPL catalytic spans 29 to 216; it reads PATQRVLFLW…AFFAHYGERV (188 aa). ATP-binding positions include arginine 71, 76-79, and lysine 134; that span reads GAVF. Position 134 (lysine 134) interacts with (R)-lipoate.

This sequence belongs to the LplA family. As to quaternary structure, monomer.

Its subcellular location is the cytoplasm. It catalyses the reaction L-lysyl-[lipoyl-carrier protein] + (R)-lipoate + ATP = N(6)-[(R)-lipoyl]-L-lysyl-[lipoyl-carrier protein] + AMP + diphosphate + H(+). It participates in protein modification; protein lipoylation via exogenous pathway; protein N(6)-(lipoyl)lysine from lipoate: step 1/2. It functions in the pathway protein modification; protein lipoylation via exogenous pathway; protein N(6)-(lipoyl)lysine from lipoate: step 2/2. In terms of biological role, catalyzes both the ATP-dependent activation of exogenously supplied lipoate to lipoyl-AMP and the transfer of the activated lipoyl onto the lipoyl domains of lipoate-dependent enzymes. The chain is Lipoate-protein ligase A from Salmonella typhimurium (strain LT2 / SGSC1412 / ATCC 700720).